The sequence spans 671 residues: Kinesin-like protein KIF2C (671 aa).

The globular stretch occupies residues 1-200; sequence MIDIDDVAAI…CNPLTVTDPI (200 aa). The tract at residues 37–58 is disordered; that stretch reads QKRKSVNSKIPGPKEGLRSRST. The residue at position 41 (Ser-41) is a Phosphoserine; by AURKB. A Microtubule tip localization signal motif is present at residues 44–47; the sequence is SKIP. A phosphoserine mark is found at Ser-55, Ser-57, Ser-61, Ser-112, Ser-121, Ser-133, and Ser-138. The disordered stretch occupies residues 115–138; it reads AEEQAHSTRSTSSANPGNSVRRKS. A compositionally biased stretch (polar residues) spans 121–132; sequence STRSTSSANPGN. The interval 153–184 is negative regulator of microtubule-binding; it reads EKRAQNSEIRIKRAQEYDNSFPNWEFARMIKE. Residues 204-534 form the Kinesin motor domain; the sequence is RICVCVRKRP…LRYADRVKEL (331 aa). ATP contacts are provided by residues Arg-210 and 294-301; that span reads GQTGSGKT. Ser-465 carries the post-translational modification Phosphoserine. The disordered stretch occupies residues 533 to 568; that stretch reads ELSPHSGPSGEQAVQMETEEMDASSHGASLTGNEEE. Positions 566 to 601 form a coiled coil; sequence EEEELSSQMSSFNEAMTQIRELEERAMEELREIIQQ. Ser-576 carries the post-translational modification Phosphoserine.

The protein belongs to the TRAFAC class myosin-kinesin ATPase superfamily. Kinesin family. MCAK/KIF2 subfamily. In terms of assembly, interacts with CENPH. Interacts with MTUS2/TIP150; the interaction is direct. Interacts with MAPRE1; the interaction is direct, regulated by phosphorylation and is probably required for targeting to growing microtubule plus ends. Interacts with KIF18B at microtubule tips; this interaction increases the affinity of both partners for microtubule plus ends and is required for robust microtubule depolymerization. Phosphorylation by AURKA or AURKB strongly reduces KIF18B-binding. In terms of processing, phosphorylation by AURKB, regulates association with centromeres and kinetochores and the microtubule depolymerization activity. Ubiquitinated. As to expression, testis. Localized to the meiotically active cells of the seminiferous epithelia in the testis.

It is found in the cytoplasm. Its subcellular location is the cytoskeleton. The protein resides in the nucleus. The protein localises to the chromosome. It localises to the centromere. It is found in the kinetochore. Functionally, in complex with KIF18B, constitutes the major microtubule plus-end depolymerizing activity in mitotic cells. Regulates the turnover of microtubules at the kinetochore and functions in chromosome segregation during mitosis. Plays a role in chromosome congression and is required for the lateral to end-on conversion of the chromosome-microtubule attachment. In Rattus norvegicus (Rat), this protein is Kinesin-like protein KIF2C (Kif2c).